We begin with the raw amino-acid sequence, 74 residues long: Protein SlyX homolog (74 aa).

Residues 54 to 74 (QDRNPDAQEPYSLRDEIPPHY) form a disordered region.

This sequence belongs to the SlyX family.

This Neisseria gonorrhoeae (strain ATCC 700825 / FA 1090) protein is Protein SlyX homolog.